A 181-amino-acid chain; its full sequence is Probable pyruvoyl-dependent arginine decarboxylase (181 aa).

Position 43 is a pyruvic acid (Ser) (Ser-43).

It belongs to the PdaD family. The cofactor is pyruvate.

It carries out the reaction L-arginine + H(+) = agmatine + CO2. The sequence is that of Probable pyruvoyl-dependent arginine decarboxylase from Prosthecochloris aestuarii (strain DSM 271 / SK 413).